The following is a 353-amino-acid chain: Photosystem II protein D1 (353 aa).

T2 carries the post-translational modification N-acetylthreonine. T2 carries the phosphothreonine modification. The next 3 membrane-spanning stretches (helical) occupy residues 29–46 (YIGW…TATS), 118–133 (HFLL…EWEL), and 142–156 (WIAV…AATA). Residue H118 participates in chlorophyll a binding. Residue Y126 participates in pheophytin a binding. Residues D170 and E189 each contribute to the [CaMn4O5] cluster site. The helical transmembrane segment at 197–218 (FHMLGVAGVFGGSLFSAMHGSL) threads the bilayer. A chlorophyll a-binding site is contributed by H198. A quinone contacts are provided by residues H215 and 264–265 (SF). H215 is a binding site for Fe cation. Position 272 (H272) interacts with Fe cation. The chain crosses the membrane as a helical span at residues 274–288 (FLAAWPVVGIWFTAL). Positions 332, 333, 342, and 344 each coordinate [CaMn4O5] cluster. Positions 345 to 353 (AVEANSIDG) are excised as a propeptide.

The protein belongs to the reaction center PufL/M/PsbA/D family. PSII is composed of 1 copy each of membrane proteins PsbA, PsbB, PsbC, PsbD, PsbE, PsbF, PsbH, PsbI, PsbJ, PsbK, PsbL, PsbM, PsbT, PsbX, PsbY, PsbZ, Psb30/Ycf12, at least 3 peripheral proteins of the oxygen-evolving complex and a large number of cofactors. It forms dimeric complexes. The D1/D2 heterodimer binds P680, chlorophylls that are the primary electron donor of PSII, and subsequent electron acceptors. It shares a non-heme iron and each subunit binds pheophytin, quinone, additional chlorophylls, carotenoids and lipids. D1 provides most of the ligands for the Mn4-Ca-O5 cluster of the oxygen-evolving complex (OEC). There is also a Cl(-1) ion associated with D1 and D2, which is required for oxygen evolution. The PSII complex binds additional chlorophylls, carotenoids and specific lipids. serves as cofactor. In terms of processing, tyr-161 forms a radical intermediate that is referred to as redox-active TyrZ, YZ or Y-Z. Post-translationally, C-terminally processed by CTPA; processing is essential to allow assembly of the oxygen-evolving complex and thus photosynthetic growth.

The protein localises to the plastid. The protein resides in the chloroplast thylakoid membrane. It carries out the reaction 2 a plastoquinone + 4 hnu + 2 H2O = 2 a plastoquinol + O2. Photosystem II (PSII) is a light-driven water:plastoquinone oxidoreductase that uses light energy to abstract electrons from H(2)O, generating O(2) and a proton gradient subsequently used for ATP formation. It consists of a core antenna complex that captures photons, and an electron transfer chain that converts photonic excitation into a charge separation. The D1/D2 (PsbA/PsbD) reaction center heterodimer binds P680, the primary electron donor of PSII as well as several subsequent electron acceptors. The protein is Photosystem II protein D1 of Cryptomeria japonica (Japanese cedar).